We begin with the raw amino-acid sequence, 455 residues long: Golgi pH regulator (455 aa).

2 consecutive transmembrane segments (helical) span residues 5–25 (IDSS…WLFF) and 46–66 (VTFA…LGVL). Residue Asn-67 is glycosylated (N-linked (GlcNAc...) asparagine). Helical transmembrane passes span 79–99 (LCVI…YFVV), 111–131 (LFAC…GDPF), and 150–170 (VGVI…VNCP). N-linked (GlcNAc...) asparagine glycans are attached at residues Asn-180 and Asn-243. 4 helical membrane passes run 290–310 (GYFF…NIVF), 343–363 (ISFI…LITL), 378–398 (VIVL…VLLI), and 425–445 (WFDV…YLAH).

The protein belongs to the Golgi pH regulator (TC 1.A.38) family. In terms of assembly, homotrimer.

The protein resides in the golgi apparatus membrane. It catalyses the reaction iodide(out) = iodide(in). The catalysed reaction is chloride(in) = chloride(out). The enzyme catalyses bromide(in) = bromide(out). It carries out the reaction fluoride(in) = fluoride(out). Its function is as follows. Voltage-gated channel that enables the transfer of anions such as iodide, chloride, bromide and fluoride which may function in counter-ion conductance and participates in Golgi acidification. In Gallus gallus (Chicken), this protein is Golgi pH regulator.